We begin with the raw amino-acid sequence, 309 residues long: UPF0282 protein Msed_0584 (309 aa).

Belongs to the UPF0282 family.

This chain is UPF0282 protein Msed_0584, found in Metallosphaera sedula (strain ATCC 51363 / DSM 5348 / JCM 9185 / NBRC 15509 / TH2).